We begin with the raw amino-acid sequence, 51 residues long: UPF0181 protein HAPS_0710 (51 aa).

It belongs to the UPF0181 family.

This is UPF0181 protein HAPS_0710 from Glaesserella parasuis serovar 5 (strain SH0165) (Haemophilus parasuis).